The primary structure comprises 358 residues: Cytoplasmic dynein 2 light intermediate chain 1 (358 aa).

Disordered regions lie at residues 1-35 (MPKV…EDAH) and 307-358 (ESTR…ALDP). A compositionally biased stretch (acidic residues) spans 24–33 (TDEEEAEEED). 2 stretches are compositionally biased toward basic and acidic residues: residues 307–320 (ESTR…DPVK) and 333–349 (RAQK…EQAK).

The protein belongs to the dynein light intermediate chain family. In terms of assembly, light intermediate chain of the cytoplasmic dynein complex 2, a multisubunit complex composed at least of eleven different proteins. The cytoplasmic dynein 2 complex consists of two catalytic heavy chains (HCs) and a number of non-catalytic subunits presented by intermediate chains (ICs), light intermediate chains (LICs) and light chains (LCs). Among them, a heavy chain (DYNC2H1), two intermediate chains (DYNC2I2 and DYNC2I1), a light intermediate chain (DYNC2LI1), and a light chain (DYNLT2B) are unique to the dynein-2 complex, but a subset of light chains are also shared by dynein-1 and dynein-2 complexes. Dynein-2 complex is built around two copies of cytoplasmic dynein 2 heavy chain 1 (DYNC2H1). The C-terminal region forms the motor domain, which converts the energy from ATP hydrolysis into movement. Its N-terminal region forms the tail, an extended structure that binds the other subunits and holds the two heavy chains in a homodimer.

The protein localises to the cytoplasm. Its subcellular location is the cell projection. The protein resides in the cilium. It localises to the cytoskeleton. It is found in the cilium basal body. The protein localises to the cilium axoneme. Its subcellular location is the microtubule organizing center. The protein resides in the centrosome. In terms of biological role, acts as one of several non-catalytic accessory components of the cytoplasmic dynein 2 complex (dynein-2 complex), a motor protein complex that drives the movement of cargos along microtubules within cilia and flagella in concert with the intraflagellar transport (IFT) system, facilitating the assembly of these organelles. This is Cytoplasmic dynein 2 light intermediate chain 1 (dync2li1) from Danio rerio (Zebrafish).